The primary structure comprises 75 residues: Large ribosomal subunit protein bL31 (75 aa).

Zn(2+) contacts are provided by cysteine 16, cysteine 18, cysteine 37, and cysteine 40.

It belongs to the bacterial ribosomal protein bL31 family. Type A subfamily. In terms of assembly, part of the 50S ribosomal subunit. The cofactor is Zn(2+).

Binds the 23S rRNA. This Legionella pneumophila (strain Paris) protein is Large ribosomal subunit protein bL31.